The following is a 338-amino-acid chain: 1-aminocyclopropane-1-carboxylate deaminase (338 aa).

Lysine 51 is subject to N6-(pyridoxal phosphate)lysine. Serine 78 serves as the catalytic Nucleophile.

Belongs to the ACC deaminase/D-cysteine desulfhydrase family. Homotrimer. Pyridoxal 5'-phosphate is required as a cofactor.

The catalysed reaction is 1-aminocyclopropane-1-carboxylate + H2O = 2-oxobutanoate + NH4(+). In terms of biological role, catalyzes a cyclopropane ring-opening reaction, the irreversible conversion of 1-aminocyclopropane-1-carboxylate (ACC) to ammonia and alpha-ketobutyrate. Allows growth on ACC as a nitrogen source. This Acidovorax ebreus (strain TPSY) (Diaphorobacter sp. (strain TPSY)) protein is 1-aminocyclopropane-1-carboxylate deaminase.